The sequence spans 479 residues: Glucagon receptor (479 aa).

An N-terminal signal peptide occupies residues 1 to 25 (MPPARLRHPHLLLLLLLACQPQAPA). The Extracellular portion of the chain corresponds to 26-136 (AQAMDFLFQK…ELGVQREVAE (111 aa)). 3 cysteine pairs are disulfide-bonded: Cys-43–Cys-67, Cys-58–Cys-100, and Cys-81–Cys-121. N-linked (GlcNAc...) asparagine glycosylation is found at Asn-46, Asn-59, Asn-74, Asn-78, and Asn-117. A helical transmembrane segment spans residues 137–161 (MYSSFQAMYTAGYSLSLAALLLALA). The Cytoplasmic portion of the chain corresponds to 162–173 (ILLGLSKLHCTR). The helical transmembrane segment at 174 to 198 (NYIHANLLASFVLRASSVLALDALL) threads the bilayer. Over 199–225 (KTRYSQRLGDDLSVSIWLSDEAVAGCR) the chain is Extracellular. Cysteines 224 and 294 form a disulfide. A helical membrane pass occupies residues 226-249 (VAAVFMQYGVVANYCWLLVEGVYL). The Cytoplasmic portion of the chain corresponds to 250 to 263 (HSLLRQATIPERSC). A helical membrane pass occupies residues 264 to 285 (FPLYLAIGWGAPMLFVIPWAVV). Residues 286–303 (KCLFENIQCWTSNDNMGF) are Extracellular-facing. The chain crosses the membrane as a helical span at residues 304 to 326 (WWILRFPVFLAILINFSIFIRVL). Residues 327 to 350 (HVLVAKLRAHQMRCTDYKFRLARS) are Cytoplasmic-facing. The chain crosses the membrane as a helical span at residues 351 to 369 (TLTLIPLLGVHEVVFAFVT). The Extracellular segment spans residues 370-381 (DEHAQGALRSAK). Residues 382 to 402 (LFFDLFLSSFQGLLVAVLYCF) form a helical membrane-spanning segment. Residues 403–479 (LNKEVQAELL…GLPGVAENPF (77 aa)) are Cytoplasmic-facing. The tract at residues 426-479 (KAHRVGSHSARPPSGPPSEKLLLSTGGSSNGTSQEPSAETHLASGLPGVAENPF) is disordered. Residues 446–458 (LLLSTGGSSNGTS) show a composition bias toward low complexity. Ser-458 carries the post-translational modification Phosphoserine.

Belongs to the G-protein coupled receptor 2 family. In terms of processing, ligand-binding promotes phosphorylation of serine residues in the C-terminal cytoplasmic domain. Phosphorylation is important for receptor endocytosis after ligand-binding.

The protein localises to the cell membrane. Functionally, G-protein coupled receptor for glucagon that plays a central role in the regulation of blood glucose levels and glucose homeostasis. Regulates the rate of hepatic glucose production by promoting glycogen hydrolysis and gluconeogenesis. Plays an important role in mediating the responses to fasting. Ligand binding causes a conformation change that triggers signaling via guanine nucleotide-binding proteins (G proteins) and modulates the activity of down-stream effectors, such as adenylate cyclase. Promotes activation of adenylate cyclase. Besides, plays a role in signaling via a phosphatidylinositol-calcium second messenger system. In Sus scrofa (Pig), this protein is Glucagon receptor.